Consider the following 252-residue polypeptide: Endonuclease NucS (252 aa).

This sequence belongs to the NucS endonuclease family.

Its subcellular location is the cytoplasm. Cleaves both 3' and 5' ssDNA extremities of branched DNA structures. The sequence is that of Endonuclease NucS from Thermococcus kodakarensis (strain ATCC BAA-918 / JCM 12380 / KOD1) (Pyrococcus kodakaraensis (strain KOD1)).